Consider the following 210-residue polypeptide: Protein VNG_2543C (210 aa).

The AMMECR1 domain occupies 12–206; that stretch reads EDGARTVELA…ETGDEDDPVE (195 aa).

The chain is Protein VNG_2543C from Halobacterium salinarum (strain ATCC 700922 / JCM 11081 / NRC-1) (Halobacterium halobium).